The primary structure comprises 172 residues: T-cell receptor gamma chain C region C7.5 (172 aa).

Positions 1 to 140 (DKKLDADISP…QFTITSAYYT (140 aa)) are c region. Residues 141–160 (YLLLLLKSVIYLAIISFSLL) form a helical membrane-spanning segment. Residues 161 to 172 (RRTSVCCNEKKS) lie on the Cytoplasmic side of the membrane.

It localises to the membrane. The polypeptide is T-cell receptor gamma chain C region C7.5 (Mus musculus (Mouse)).